The following is a 1047-amino-acid chain: tRNA wybutosine-synthesizing protein 4 (1047 aa).

S-adenosyl-L-methionine contacts are provided by residues Arg69, Gly95, Asp122, 169–170 (DL), and Glu196. Residues 814-1003 (GRQYLRSISA…AAGRDVYGNR (190 aa)) form the JmjC domain.

Belongs to the methyltransferase superfamily. LCMT family.

The catalysed reaction is 7-[(3S)-3-amino-3-carboxypropyl]wyosine(37) in tRNA(Phe) + S-adenosyl-L-methionine = 7-[(3S)-(3-amino-3-methoxycarbonyl)propyl]wyosine(37) in tRNA(Phe) + S-adenosyl-L-homocysteine. It catalyses the reaction 7-[(3S)-(3-amino-3-methoxycarbonyl)propyl]wyosine(37) in tRNA(Phe) + S-adenosyl-L-methionine + CO2 = wybutosine(37) in tRNA(Phe) + S-adenosyl-L-homocysteine + 2 H(+). It functions in the pathway tRNA modification; wybutosine-tRNA(Phe) biosynthesis. Probable S-adenosyl-L-methionine-dependent methyltransferase that acts as a component of the wybutosine biosynthesis pathway. Wybutosine is a hyper modified guanosine with a tricyclic base found at the 3'-position adjacent to the anticodon of eukaryotic phenylalanine tRNA. May methylate the carboxyl group of leucine residues to form alpha-leucine ester residues. In Aspergillus fumigatus (strain ATCC MYA-4609 / CBS 101355 / FGSC A1100 / Af293) (Neosartorya fumigata), this protein is tRNA wybutosine-synthesizing protein 4 (ppm2).